The chain runs to 150 residues: Small ribosomal subunit protein eS19 (150 aa).

It belongs to the eukaryotic ribosomal protein eS19 family. As to quaternary structure, part of the 30S ribosomal subunit.

Its function is as follows. May be involved in maturation of the 30S ribosomal subunit. This chain is Small ribosomal subunit protein eS19, found in Thermoplasma acidophilum (strain ATCC 25905 / DSM 1728 / JCM 9062 / NBRC 15155 / AMRC-C165).